The chain runs to 528 residues: Tyrosine--tRNA ligase, cytoplasmic (528 aa).

Position 39 (Tyr39) interacts with L-tyrosine. The 'HIGH' region motif lies at 44 to 52 (TTGKPHVAY). L-tyrosine contacts are provided by Tyr166, Gln170, Asp173, and Gln188. Residues 222-226 (KMSSS) carry the 'KMSKS' region motif. Positions 242–247 (KKKLKK) match the Nuclear localization signal motif. Residues 335-364 (KLSNDAYPGASKQKTVPKGSTKNSGPEEID) are disordered. Residues 346-358 (KQKTVPKGSTKNS) show a composition bias toward polar residues. The tRNA-binding domain maps to 364 to 468 (DPSLLDLRVG…TGSAPGERIY (105 aa)).

This sequence belongs to the class-I aminoacyl-tRNA synthetase family. In terms of assembly, homodimer.

It is found in the cytoplasm. It localises to the nucleus. It catalyses the reaction tRNA(Tyr) + L-tyrosine + ATP = L-tyrosyl-tRNA(Tyr) + AMP + diphosphate + H(+). Its function is as follows. Catalyzes the attachment of tyrosine to tRNA(Tyr) in a two-step reaction: tyrosine is first activated by ATP to form Tyr-AMP and then transferred to the acceptor end of tRNA(Tyr). This is Tyrosine--tRNA ligase, cytoplasmic (yars1) from Xenopus tropicalis (Western clawed frog).